Consider the following 242-residue polypeptide: Invasion chromosome antigen R (242 aa).

It is found in the secreted. Functionally, may contribute to pathogenesis, although some of its characteristics suggest it is a fossil gene. In Shigella flexneri serotype 5a (strain M90T), this protein is Invasion chromosome antigen R.